Reading from the N-terminus, the 166-residue chain is 2-C-methyl-D-erythritol 2,4-cyclodiphosphate synthase (166 aa).

Residues aspartate 17 and histidine 19 each contribute to the a divalent metal cation site. 4-CDP-2-C-methyl-D-erythritol 2-phosphate contacts are provided by residues 17–19 (DSH) and 43–44 (HS). Histidine 51 serves as a coordination point for a divalent metal cation. 4-CDP-2-C-methyl-D-erythritol 2-phosphate contacts are provided by residues 65–67 (DIG), 109–115 (AQKPKMA), and arginine 151.

The protein belongs to the IspF family. In terms of assembly, homotrimer. A divalent metal cation is required as a cofactor.

The enzyme catalyses 4-CDP-2-C-methyl-D-erythritol 2-phosphate = 2-C-methyl-D-erythritol 2,4-cyclic diphosphate + CMP. Its pathway is isoprenoid biosynthesis; isopentenyl diphosphate biosynthesis via DXP pathway; isopentenyl diphosphate from 1-deoxy-D-xylulose 5-phosphate: step 4/6. Involved in the biosynthesis of isopentenyl diphosphate (IPP) and dimethylallyl diphosphate (DMAPP), two major building blocks of isoprenoid compounds. Catalyzes the conversion of 4-diphosphocytidyl-2-C-methyl-D-erythritol 2-phosphate (CDP-ME2P) to 2-C-methyl-D-erythritol 2,4-cyclodiphosphate (ME-CPP) with a corresponding release of cytidine 5-monophosphate (CMP). In Rhodopirellula baltica (strain DSM 10527 / NCIMB 13988 / SH1), this protein is 2-C-methyl-D-erythritol 2,4-cyclodiphosphate synthase.